A 953-amino-acid chain; its full sequence is Zinc finger CCCH domain-containing protein 18 (953 aa).

N-acetylmethionine is present on methionine 1. Residues methionine 1–proline 14 show a composition bias toward basic and acidic residues. Disordered stretches follow at residues methionine 1–proline 222 and glutamine 391–arginine 928. The residue at position 6 (serine 6) is a Phosphoserine. Acidic residues predominate over residues glutamate 15–aspartate 26. Phosphoserine is present on residues serine 34, serine 46, serine 53, serine 59, serine 67, serine 74, serine 78, serine 83, and serine 95. Over residues glutamine 60 to arginine 72 the composition is skewed to acidic residues. The segment covering cysteine 97–glutamate 106 has biased composition (acidic residues). Residues glutamate 105–valine 134 are a coiled coil. Residues aspartate 107 to aspartate 124 are compositionally biased toward basic and acidic residues. Position 109 is a phosphothreonine (threonine 109). A phosphoserine mark is found at serine 110 and serine 118. Acidic residues-rich tracts occupy residues glutamate 125 to glutamate 136 and glutamine 143 to lysine 158. Basic and acidic residues predominate over residues glycine 159–lysine 168. Threonine 162 carries the post-translational modification Phosphothreonine. Phosphoserine is present on residues serine 173 and serine 179. Residues glycine 175 to aspartate 190 show a composition bias toward basic and acidic residues. Acidic residues predominate over residues aspartate 191 to glutamate 207. A compositionally biased stretch (basic and acidic residues) spans glycine 208–lysine 217. The segment at arginine 219–valine 245 adopts a C3H1-type zinc-finger fold. Positions glutamate 396–lysine 482 are enriched in basic and acidic residues. The stretch at histidine 399–aspartate 464 forms a coiled coil. Phosphoserine is present on serine 487. Residue lysine 510 forms a Glycyl lysine isopeptide (Lys-Gly) (interchain with G-Cter in SUMO2) linkage. Positions lysine 510–arginine 520 are enriched in basic and acidic residues. Serine 532, serine 534, and serine 536 each carry phosphoserine. Residues serine 545 to proline 606 show a composition bias toward low complexity. Residues lysine 622 and lysine 661 each participate in a glycyl lysine isopeptide (Lys-Gly) (interchain with G-Cter in SUMO2) cross-link. The segment covering lysine 661 to arginine 670 has biased composition (basic and acidic residues). Low complexity-rich tracts occupy residues glycine 692–serine 725 and alanine 736–alanine 750. Residues lysine 760–serine 774 show a composition bias toward basic and acidic residues. A Glycyl lysine isopeptide (Lys-Gly) (interchain with G-Cter in SUMO2) cross-link involves residue lysine 766. Positions proline 778–glutamine 798 are enriched in low complexity. Position 814 is an N6-acetyllysine (lysine 814). Lysine 817 participates in a covalent cross-link: Glycyl lysine isopeptide (Lys-Gly) (interchain with G-Cter in SUMO2). Positions alanine 824–glutamine 841 are enriched in basic and acidic residues. Residues serine 842, serine 852, serine 868, serine 893, and serine 896 each carry the phosphoserine modification. Positions serine 893–proline 906 are enriched in low complexity. Lysine 908 is covalently cross-linked (Glycyl lysine isopeptide (Lys-Gly) (interchain with G-Cter in SUMO2)). Over residues serine 916–leucine 925 the composition is skewed to polar residues. The stretch at lysine 921–proline 950 forms a coiled coil.

In terms of assembly, interacts with ZFC3H1 in a RNase-insensitive manner.

The protein localises to the nucleus. This chain is Zinc finger CCCH domain-containing protein 18, found in Homo sapiens (Human).